Reading from the N-terminus, the 476-residue chain is Cysteine--tRNA ligase (476 aa).

Residue Cys-36 coordinates Zn(2+). The short motif at 38–48 (PTVYDYAHIGN) is the 'HIGH' region element. Positions 221, 246, and 250 each coordinate Zn(2+). Residues 278–282 (KMSKS) carry the 'KMSKS' region motif. Lys-281 serves as a coordination point for ATP.

Belongs to the class-I aminoacyl-tRNA synthetase family. As to quaternary structure, monomer. Zn(2+) serves as cofactor.

Its subcellular location is the cytoplasm. It carries out the reaction tRNA(Cys) + L-cysteine + ATP = L-cysteinyl-tRNA(Cys) + AMP + diphosphate. This chain is Cysteine--tRNA ligase, found in Chlamydia felis (strain Fe/C-56) (Chlamydophila felis).